We begin with the raw amino-acid sequence, 428 residues long: Serine--tRNA ligase (428 aa).

236 to 238 (TAE) contributes to the L-serine binding site. Residue 267-269 (RSE) participates in ATP binding. Glu290 lines the L-serine pocket. Residue 354 to 357 (EISS) coordinates ATP. An L-serine-binding site is contributed by Ser388.

It belongs to the class-II aminoacyl-tRNA synthetase family. Type-1 seryl-tRNA synthetase subfamily. Homodimer. The tRNA molecule binds across the dimer.

The protein localises to the cytoplasm. It carries out the reaction tRNA(Ser) + L-serine + ATP = L-seryl-tRNA(Ser) + AMP + diphosphate + H(+). It catalyses the reaction tRNA(Sec) + L-serine + ATP = L-seryl-tRNA(Sec) + AMP + diphosphate + H(+). It functions in the pathway aminoacyl-tRNA biosynthesis; selenocysteinyl-tRNA(Sec) biosynthesis; L-seryl-tRNA(Sec) from L-serine and tRNA(Sec): step 1/1. Functionally, catalyzes the attachment of serine to tRNA(Ser). Is also able to aminoacylate tRNA(Sec) with serine, to form the misacylated tRNA L-seryl-tRNA(Sec), which will be further converted into selenocysteinyl-tRNA(Sec). This Psychrobacter cryohalolentis (strain ATCC BAA-1226 / DSM 17306 / VKM B-2378 / K5) protein is Serine--tRNA ligase.